The primary structure comprises 569 residues: Methionine--tRNA ligase (569 aa).

Positions 11–21 (PYINGIKHLGN) match the 'HIGH' region motif. Residues cysteine 143, cysteine 146, cysteine 156, and cysteine 159 each coordinate Zn(2+). Positions 342-346 (KFSTS) match the 'KMSKS' region motif. Position 345 (threonine 345) interacts with ATP.

This sequence belongs to the class-I aminoacyl-tRNA synthetase family. MetG type 1 subfamily. In terms of assembly, monomer. Requires Zn(2+) as cofactor.

It is found in the cytoplasm. The enzyme catalyses tRNA(Met) + L-methionine + ATP = L-methionyl-tRNA(Met) + AMP + diphosphate. In terms of biological role, is required not only for elongation of protein synthesis but also for the initiation of all mRNA translation through initiator tRNA(fMet) aminoacylation. This is Methionine--tRNA ligase from Caulobacter vibrioides (strain ATCC 19089 / CIP 103742 / CB 15) (Caulobacter crescentus).